A 99-amino-acid chain; its full sequence is Integration host factor subunit alpha (99 aa).

The disordered stretch occupies residues Phe52 to Glu73.

The protein belongs to the bacterial histone-like protein family. In terms of assembly, heterodimer of an alpha and a beta chain.

This protein is one of the two subunits of integration host factor, a specific DNA-binding protein that functions in genetic recombination as well as in transcriptional and translational control. This Legionella pneumophila subsp. pneumophila (strain Philadelphia 1 / ATCC 33152 / DSM 7513) protein is Integration host factor subunit alpha.